The chain runs to 717 residues: UvrABC system protein C (717 aa).

The 80-residue stretch at 16–95 (DSPGVYKFRD…IKEFDPRFNV (80 aa)) folds into the GIY-YIG domain. The 36-residue stretch at 208–243 (GTYIRRLEKDMMQAAEEMEYERAARLRDDAEALKRA) folds into the UVR domain. The disordered stretch occupies residues 467–548 (ERTGEWEEAP…PREDDGRPKR (82 aa)). Residues 477-522 (EAAPGSASVHASATGPAATGQATAGPAAMGQAAAGPVSTGPAATGP) are compositionally biased toward low complexity.

The protein belongs to the UvrC family. Interacts with UvrB in an incision complex.

It is found in the cytoplasm. The UvrABC repair system catalyzes the recognition and processing of DNA lesions. UvrC both incises the 5' and 3' sides of the lesion. The N-terminal half is responsible for the 3' incision and the C-terminal half is responsible for the 5' incision. In Streptomyces griseus subsp. griseus (strain JCM 4626 / CBS 651.72 / NBRC 13350 / KCC S-0626 / ISP 5235), this protein is UvrABC system protein C.